The chain runs to 201 residues: Small ribosomal subunit protein uS4 (201 aa).

The 61-residue stretch at 93-153 (QRLDNIVYRL…EKSKNLVIIK (61 aa)) folds into the S4 RNA-binding domain.

Belongs to the universal ribosomal protein uS4 family. As to quaternary structure, part of the 30S ribosomal subunit. Contacts protein S5. The interaction surface between S4 and S5 is involved in control of translational fidelity.

In terms of biological role, one of the primary rRNA binding proteins, it binds directly to 16S rRNA where it nucleates assembly of the body of the 30S subunit. Its function is as follows. With S5 and S12 plays an important role in translational accuracy. This chain is Small ribosomal subunit protein uS4, found in Latilactobacillus sakei subsp. sakei (strain 23K) (Lactobacillus sakei subsp. sakei).